Reading from the N-terminus, the 294-residue chain is Elongation factor Ts (294 aa).

The involved in Mg(2+) ion dislocation from EF-Tu stretch occupies residues 80–83; that stretch reads TDFV.

This sequence belongs to the EF-Ts family.

It localises to the cytoplasm. Its function is as follows. Associates with the EF-Tu.GDP complex and induces the exchange of GDP to GTP. It remains bound to the aminoacyl-tRNA.EF-Tu.GTP complex up to the GTP hydrolysis stage on the ribosome. The polypeptide is Elongation factor Ts (Listeria monocytogenes serotype 4b (strain CLIP80459)).